Consider the following 276-residue polypeptide: F420-dependent methylenetetrahydromethanopterin dehydrogenase (276 aa).

Belongs to the MTD family.

The catalysed reaction is 5,10-methylenetetrahydromethanopterin + oxidized coenzyme F420-(gamma-L-Glu)(n) + 2 H(+) = 5,10-methenyl-5,6,7,8-tetrahydromethanopterin + reduced coenzyme F420-(gamma-L-Glu)(n). It participates in one-carbon metabolism; methanogenesis from CO(2); 5,10-methylene-5,6,7,8-tetrahydromethanopterin from 5,10-methenyl-5,6,7,8-tetrahydromethanopterin (coenzyme F420 route): step 1/1. Catalyzes the reversible reduction of methenyl-H(4)MPT(+) to methylene-H(4)MPT. The sequence is that of F420-dependent methylenetetrahydromethanopterin dehydrogenase from Methanococcus vannielii (strain ATCC 35089 / DSM 1224 / JCM 13029 / OCM 148 / SB).